The sequence spans 73 residues: Putative sodium channel toxin Ts39 (73 aa).

An N-terminal signal peptide occupies residues 1 to 22 (MKTLNFCLFLVIISSLTVRVFC). The LCN-type CS-alpha/beta domain maps to 24-73 (NDRFLTVNDNYVICLYINKSFVNCENLCKAYMNAKDGFCRQPHCFCTDVE). Intrachain disulfides connect Cys37–Cys62, Cys47–Cys67, and Cys51–Cys69.

It belongs to the long (3 C-C) scorpion toxin superfamily. Sodium channel inhibitor family. Expressed by the venom gland.

Its subcellular location is the secreted. Functionally, putative sodium channel toxin. The polypeptide is Putative sodium channel toxin Ts39 (Tityus serrulatus (Brazilian scorpion)).